A 155-amino-acid polypeptide reads, in one-letter code: SsrA-binding protein (155 aa).

The disordered stretch occupies residues 135–155 (KRQDIKQRDVERETRREIMRH).

This sequence belongs to the SmpB family.

It localises to the cytoplasm. Required for rescue of stalled ribosomes mediated by trans-translation. Binds to transfer-messenger RNA (tmRNA), required for stable association of tmRNA with ribosomes. tmRNA and SmpB together mimic tRNA shape, replacing the anticodon stem-loop with SmpB. tmRNA is encoded by the ssrA gene; the 2 termini fold to resemble tRNA(Ala) and it encodes a 'tag peptide', a short internal open reading frame. During trans-translation Ala-aminoacylated tmRNA acts like a tRNA, entering the A-site of stalled ribosomes, displacing the stalled mRNA. The ribosome then switches to translate the ORF on the tmRNA; the nascent peptide is terminated with the 'tag peptide' encoded by the tmRNA and targeted for degradation. The ribosome is freed to recommence translation, which seems to be the essential function of trans-translation. This is SsrA-binding protein from Oleidesulfovibrio alaskensis (strain ATCC BAA-1058 / DSM 17464 / G20) (Desulfovibrio alaskensis).